The chain runs to 162 residues: Disulfide bond formation protein B (162 aa).

Topologically, residues 1-4 are cytoplasmic; it reads MRII. The helical transmembrane segment at 5-21 threads the bilayer; sequence FLLIFLACAGLIGYALY. Residues 22-39 lie on the Periplasmic side of the membrane; the sequence is LQLMDGLLPCPLCIFQRI. Cysteine 31 and cysteine 34 are joined by a disulfide. Residues 40 to 56 form a helical membrane-spanning segment; that stretch reads AYWLIGITALFTFIHNP. Residues 57 to 62 lie on the Cytoplasmic side of the membrane; it reads QSLGQH. Residues 63–80 form a helical membrane-spanning segment; sequence IYYGLIILFSLAGAIVAG. The Periplasmic segment spans residues 81–136; sequence RQAWLIRFPEAFECGISPEEAFLNGLPLAQWWPNMFEANGDCNDGTWQFLSLTLPD. Residues cysteine 94 and cysteine 122 are joined by a disulfide bond. Residues 137-155 traverse the membrane as a helical segment; that stretch reads WSLLIFAAFGIIAGLLWHK. The Cytoplasmic segment spans residues 156–162; the sequence is KYNSINQ.

The protein belongs to the DsbB family.

It is found in the cell inner membrane. In terms of biological role, required for disulfide bond formation in some periplasmic proteins. Acts by oxidizing the DsbA protein. This chain is Disulfide bond formation protein B, found in Nitrosomonas eutropha (strain DSM 101675 / C91 / Nm57).